Consider the following 89-residue polypeptide: Small ribosomal subunit protein uS15 (89 aa).

The protein belongs to the universal ribosomal protein uS15 family. Part of the 30S ribosomal subunit. Forms a bridge to the 50S subunit in the 70S ribosome, contacting the 23S rRNA.

In terms of biological role, one of the primary rRNA binding proteins, it binds directly to 16S rRNA where it helps nucleate assembly of the platform of the 30S subunit by binding and bridging several RNA helices of the 16S rRNA. Functionally, forms an intersubunit bridge (bridge B4) with the 23S rRNA of the 50S subunit in the ribosome. This is Small ribosomal subunit protein uS15 from Salmonella schwarzengrund (strain CVM19633).